A 265-amino-acid polypeptide reads, in one-letter code: Mlc titration factor A (265 aa).

His111, His148, His152, and Glu211 together coordinate Zn(2+).

Belongs to the MtfA family. In terms of assembly, interacts with Mlc. Zn(2+) serves as cofactor.

It localises to the cytoplasm. Functionally, involved in the modulation of the activity of the glucose-phosphotransferase system (glucose-PTS). Interacts with the transcriptional repressor Mlc, preventing its interaction with DNA and leading to the modulation of expression of genes regulated by Mlc, including ptsG, which encodes the PTS system glucose-specific EIICB component. Shows zinc-dependent metallopeptidase activity. This chain is Mlc titration factor A, found in Cronobacter sakazakii (strain ATCC BAA-894) (Enterobacter sakazakii).